Reading from the N-terminus, the 310-residue chain is GPN-loop GTPase 2 (310 aa).

Ala2 carries the N-acetylalanine modification. 19–24 (GSGKTT) serves as a coordination point for GTP. The Gly-Pro-Asn (GPN)-loop; involved in dimer interface motif lies at 76–78 (GPN). 178–181 (SKMD) provides a ligand contact to GTP.

This sequence belongs to the GPN-loop GTPase family. In terms of assembly, heterodimers with GPN1 or GPN3. Binds to RNA polymerase II (RNAPII).

Small GTPase required for proper localization of RNA polymerase II and III (RNAPII and RNAPIII). May act at an RNAP assembly step prior to nuclear import. The polypeptide is GPN-loop GTPase 2 (Rattus norvegicus (Rat)).